The following is a 113-amino-acid chain: Ranasmurfin (113 aa).

At tyrosine 2 the chain carries 2',4',5'-topaquinone. Residues 2 to 31 (YACSFPPSEIPGSKECLAEALQKHQGFKKK) constitute a cross-link (lysine tyrosylquinone (Tyr-Lys)). Disulfide bonds link cysteine 4–cysteine 62, cysteine 17–cysteine 65, and cysteine 37–cysteine 101. Residue serine 9 is modified to Aminomalonic acid (Ser); in chain B. Positions 17–65 (CLAEALQKHQGFKKKSYALICAYLNYKEDAENYERAAEDFDSAVKCTGC) form a cross-link, S-cysteinyl 3-(oxidosulfanyl)alanine (Cys-Cys); in chain B. The segment at residues 30 to 108 (KKSYALICAY…SLCTLFQKLY (79 aa)) is a cross-link (lysine tyrosylquinone (Lys-Tyr)). Cysteine 65 carries the post-translational modification Cysteine sulfenic acid (-SOH); in chain B. Tyrosine 108 is modified (2',4',5'-topaquinone). Zn(2+)-binding residues include tyrosine 108 and histidine 112. Residue tyrosine 108 forms a 5'-tyrosyl-5'-aminotyrosine (Tyr-Tyr) (interchain with Y-108) linkage.

In terms of assembly, homodimer. The two chains, designated A and B, differ in their modifications, but not, it is thought, in their sequence. It depends on Zn(2+) as a cofactor. As to expression, foam nest.

It localises to the secreted. The protein is Ranasmurfin of Polypedates leucomystax (Common tree frog).